A 388-amino-acid polypeptide reads, in one-letter code: Quinolone resistance protein NorA (388 aa).

Transmembrane regions (helical) follow at residues 5–25 (IFVL…VIPV), 42–62 (LLVA…GTLA), 69–89 (LIIC…AVGH), 99–119 (VIGG…IADV), 129–149 (FGYM…IGGF), 157–177 (MPFY…VVLI), 201–221 (WKVF…LSAF), 239–259 (DISI…IYFF), 269–289 (LTFI…LVIA), 293–313 (WTIM…RPAI), 331–351 (LNST…GALF), and 355–375 (IEAP…IVLI).

This sequence belongs to the major facilitator superfamily. TCR/Tet family.

It is found in the cell membrane. Functionally, involved in quinolone resistance. May constitute a membrane-associated active efflux pump of hydrophilic quinolones. This chain is Quinolone resistance protein NorA (norA), found in Staphylococcus aureus (strain MRSA252).